A 657-amino-acid polypeptide reads, in one-letter code: Autophagy-related protein 22 (657 aa).

Low complexity predominate over residues 1–15 (MAPNLQPQPQSQLQR). The disordered stretch occupies residues 1 to 78 (MAPNLQPQPQ…VVPRHFGHDA (78 aa)). Residues 1–91 (MAPNLQPQPQ…SRRELLGWYA (91 aa)) are Cytoplasmic-facing. Polar residues predominate over residues 26-40 (GLSNISKRSFRSCAT). The chain crosses the membrane as a helical span at residues 92-112 (YAFAAETYVICGIASFIPILL). Residues 113 to 155 (ETLARENGVLVSDRKTPCGSSDSKNDGDGQCIVWVFGMEINTA) lie on the Vacuolar side of the membrane. The helical transmembrane segment at 156–176 (SFAMYTFSVSVLVQALLVVSI) threads the bilayer. Over 177-187 (SCAADHGNYRK) the chain is Cytoplasmic. A helical transmembrane segment spans residues 188 to 208 (KLLLTFAWIGSFAVMSYIFIT). Over 209–212 (KDNY) the chain is Vacuolar. The helical transmembrane segment at 213 to 233 (ILGALLTVISNTSFGASFVLL) threads the bilayer. Residues 234–317 (NSFLPLLVRY…ELELSTRISA (84 aa)) are Cytoplasmic-facing. Residues 318 to 338 (IGIGTGYIAALFLQCICIGVL) form a helical membrane-spanning segment. At 339–349 (ISLHNTTWGQR) the chain is on the vacuolar side. An N-linked (GlcNAc...) asparagine glycan is attached at Asn343. Residues 350–370 (VVLFMVGVWWTVFTIPAAMWL) traverse the membrane as a helical segment. The Cytoplasmic portion of the chain corresponds to 371–384 (RPRPGPPLADNGRK). Residues 385-405 (GIMAGLAYILYAWKSLFKTIQ) traverse the membrane as a helical segment. Topologically, residues 406 to 409 (QARR) are vacuolar. The chain crosses the membrane as a helical span at residues 410–430 (LLDIVLFLAGWFLLSDAIATT). Topologically, residues 431-446 (SSTAILFAKTQLHMKP) are cytoplasmic. Residues 447–467 (WALGMINVISTTAGVFGAFGW) traverse the membrane as a helical segment. Residues 468–481 (SWVSRLFNLKAHQT) are Vacuolar-facing. A helical transmembrane segment spans residues 482–502 (ILVCIALFELIPLYGLLGYLP). Over 503–515 (FVKNWGVFGLQQP) the chain is Cytoplasmic. The chain crosses the membrane as a helical span at residues 516–536 (WEMYPLAAVYGVVLGGLSGYC). The Vacuolar segment spans residues 537–554 (RSLYGELIPPGSEAAFYA). A helical membrane pass occupies residues 555–575 (LYAITDKGSSVFGPTIVGAII). At 576 to 583 (DRTGTIRP) the chain is on the cytoplasmic side. A helical transmembrane segment spans residues 584–604 (AFWFLAVLVGFPAPLIWFIDV). At 605–657 (ERGRREGAKLAKSITDSIVQEEDESDDGAERRGMLSDYEREHGQSIDDERAGR) the chain is on the vacuolar side. Positions 615-657 (AKSITDSIVQEEDESDDGAERRGMLSDYEREHGQSIDDERAGR) are disordered. Residues 632–657 (GAERRGMLSDYEREHGQSIDDERAGR) show a composition bias toward basic and acidic residues.

This sequence belongs to the ATG22 family.

Its subcellular location is the vacuole membrane. In terms of biological role, vacuolar effluxer which mediate the efflux of leucine and other amino acids resulting from autophagic degradation. The release of autophagic amino acids allows the maintenance of protein synthesis and viability during nitrogen starvation. Autophagy is required for proper vegetative growth, asexual/sexual reproduction, and full virulence. Autophagy is particularly involved in the biosynthesis of deoxynivalenol (DON), an important virulence determinant. In Gibberella zeae (strain ATCC MYA-4620 / CBS 123657 / FGSC 9075 / NRRL 31084 / PH-1) (Wheat head blight fungus), this protein is Autophagy-related protein 22.